Reading from the N-terminus, the 356-residue chain is Holliday junction branch migration complex subunit RuvB (356 aa).

The interval 4–191 (TDKLATEQRI…FGIVARLEFY (188 aa)) is large ATPase domain (RuvB-L). ATP contacts are provided by residues leucine 30, arginine 31, glycine 72, lysine 75, threonine 76, threonine 77, 138–140 (EDY), arginine 181, tyrosine 191, and arginine 228. Residue threonine 76 participates in Mg(2+) binding. The interval 192 to 262 (DADQLSRIVR…VADAALAMLD (71 aa)) is small ATPAse domain (RuvB-S). Residues 265–356 (PVGFDLMDRK…RDEWDTPDGK (92 aa)) are head domain (RuvB-H). Residues arginine 301, arginine 320, and arginine 325 each contribute to the DNA site.

Belongs to the RuvB family. In terms of assembly, homohexamer. Forms an RuvA(8)-RuvB(12)-Holliday junction (HJ) complex. HJ DNA is sandwiched between 2 RuvA tetramers; dsDNA enters through RuvA and exits via RuvB. An RuvB hexamer assembles on each DNA strand where it exits the tetramer. Each RuvB hexamer is contacted by two RuvA subunits (via domain III) on 2 adjacent RuvB subunits; this complex drives branch migration. In the full resolvosome a probable DNA-RuvA(4)-RuvB(12)-RuvC(2) complex forms which resolves the HJ.

The protein resides in the cytoplasm. The catalysed reaction is ATP + H2O = ADP + phosphate + H(+). Its function is as follows. The RuvA-RuvB-RuvC complex processes Holliday junction (HJ) DNA during genetic recombination and DNA repair, while the RuvA-RuvB complex plays an important role in the rescue of blocked DNA replication forks via replication fork reversal (RFR). RuvA specifically binds to HJ cruciform DNA, conferring on it an open structure. The RuvB hexamer acts as an ATP-dependent pump, pulling dsDNA into and through the RuvAB complex. RuvB forms 2 homohexamers on either side of HJ DNA bound by 1 or 2 RuvA tetramers; 4 subunits per hexamer contact DNA at a time. Coordinated motions by a converter formed by DNA-disengaged RuvB subunits stimulates ATP hydrolysis and nucleotide exchange. Immobilization of the converter enables RuvB to convert the ATP-contained energy into a lever motion, pulling 2 nucleotides of DNA out of the RuvA tetramer per ATP hydrolyzed, thus driving DNA branch migration. The RuvB motors rotate together with the DNA substrate, which together with the progressing nucleotide cycle form the mechanistic basis for DNA recombination by continuous HJ branch migration. Branch migration allows RuvC to scan DNA until it finds its consensus sequence, where it cleaves and resolves cruciform DNA. The protein is Holliday junction branch migration complex subunit RuvB of Burkholderia cenocepacia (strain ATCC BAA-245 / DSM 16553 / LMG 16656 / NCTC 13227 / J2315 / CF5610) (Burkholderia cepacia (strain J2315)).